Consider the following 984-residue polypeptide: Glutamate [NMDA] receptor subunit 1 (984 aa).

A signal peptide spans 1 to 24; that stretch reads MAAAFAYRWLLCAAGIVNVLPIGA. Over 25 to 570 the chain is Extracellular; it reads QRHTASDNPS…TLVSFLQPFS (546 aa). 7 N-linked (GlcNAc...) asparagine glycosylation sites follow: N255, N311, N342, N394, N451, N478, and N498. Residues 527-529 and R534 each bind glycine; that span reads PLT. The chain crosses the membrane as a helical span at residues 571-591; sequence NTLWILVMVSVHVVALVLYLL. Over 592 to 648 the chain is Cytoplasmic; it reads DRFSPFGRFKLSHSDSNEEKALNLSSAVWFAWGVLLNSGIGEGTPRSFSARVLGMVW. The chain crosses the membrane as a helical span at residues 649-669; the sequence is AGFAMIIVASYTANLAAFLVL. Over 670–828 the chain is Extracellular; it reads ERPKTKLSGI…KTPNTLGLKN (159 aa). Residue N690 is glycosylated (N-linked (GlcNAc...) asparagine). Residues S700 and D744 each coordinate glycine. A helical membrane pass occupies residues 829–849; it reads MAGVFILVGVGIAGGVGLIII. Residues 850 to 984 are Cytoplasmic-facing; that stretch reads EVIYKKHQVK…YTSDVSHLVV (135 aa). The segment at 947–984 is disordered; that stretch reads KSGLVPPALGLGKTRPQQNPLPPRYSPGYTSDVSHLVV. Polar residues predominate over residues 974-984; it reads GYTSDVSHLVV.

It belongs to the glutamate-gated ion channel (TC 1.A.10.1) family. Forms a heteromeric NMDA channel with Nmdar2.

The protein localises to the cell membrane. It is found in the postsynaptic cell membrane. It localises to the postsynaptic density. In terms of biological role, NMDA receptor subtype of glutamate-gated ion channels with high calcium permeability and voltage-dependent sensitivity to magnesium. Mediated by glycine. This protein plays a key role in synaptic plasticity, synaptogenesis, excitotoxicity, memory acquisition and learning. It mediates neuronal functions in glutamate neurotransmission. Is involved in the cell surface targeting of NMDA receptors. Plays a role in associative learning and in long-term memory consolidation. The protein is Glutamate [NMDA] receptor subunit 1 of Drosophila virilis (Fruit fly).